The primary structure comprises 349 residues: Hypoxia-inducible factor 1-alpha inhibitor (349 aa).

Low complexity predominate over residues 1–14 (MAATAAEVAASGSG). The segment at 1–51 (MAATAAEVAASGSGEAREEAEAPGPAWDESQLRSYSFPTRPIPRLSQSDPR) is disordered. Ala2 bears the N-acetylalanine mark. Residues 2–125 (AATAAEVAAS…PRSNREEIKF (124 aa)) are interaction with VHL. One can recognise a JmjC domain in the interval 142–307 (ERLYLQQTLN…KGAPTPKRIE (166 aa)). Tyr145 lines the 2-oxoglutarate pocket. Substrate is bound by residues Asp152 and 181 to 183 (QLT). Position 196 (Thr196) interacts with 2-oxoglutarate. The Fe cation site is built by His199 and Asp201. 201–203 (DEQ) contacts substrate. 2-oxoglutarate-binding residues include Asn205 and Lys214. Substrate is bound at residue 238-239 (RQ). His279 lines the Fe cation pocket. Asn294 lines the 2-oxoglutarate pocket. Substrate contacts are provided by Ala300 and Asn321.

In terms of assembly, homodimer; homodimerization is essential for catalytic activity. Interacts with VHL and HIF1A. Part of a complex with VHL, HIF1A and HDAC1 or HDAC2 or HDAC3. Interacts with NFKB1 and NFKBIA. Interacts with NOTCH1, NOTCH2 and NOTCH3 but not with NOTCH4. Interacts with ABPA3. Interacts with TNKS2. Interacts with PPP1R12A. Interacts with UBE3A. Interacts with ASB4. Interacts with ANKS3. Interacts with NECAB3; the interaction is indirect and seems to be mediated by APBA3. Fe(2+) is required as a cofactor.

It localises to the nucleus. It is found in the cytoplasm. The protein resides in the perinuclear region. It catalyses the reaction L-asparaginyl-[hypoxia-inducible factor alpha subunit] + 2-oxoglutarate + O2 = (3S)-3-hydroxy-L-asparaginyl-[hypoxia-inducible factor alpha subunit] + succinate + CO2. The catalysed reaction is L-histidyl-[ankyrin-repeat domain protein] + 2-oxoglutarate + O2 = (3S)-3-hydroxy-L-histidyl-[ankyrin-repeat domain protein] + succinate + CO2. It carries out the reaction L-asparaginyl-[ankyrin-repeat domain protein] + 2-oxoglutarate + O2 = (3S)-3-hydroxy-L-asparaginyl-[ankyrin-repeat domain protein] + succinate + CO2. The enzyme catalyses L-aspartyl-[ankyrin-repeat domain protein] + 2-oxoglutarate + O2 = (3S)-3-hydroxy-L-aspartyl-[ankyrin-repeat domain protein] + succinate + CO2. In terms of biological role, hydroxylates HIF-1 alpha at 'Asn-799' in the C-terminal transactivation domain (CAD). Functions as an oxygen sensor and, under normoxic conditions, the hydroxylation prevents interaction of HIF-1 with transcriptional coactivators including Cbp/p300-interacting transactivator. Involved in transcriptional repression through interaction with HIF1A, VHL and histone deacetylases. Hydroxylates specific Asn residues within ankyrin repeat domains (ARD) of NFKB1, NFKBIA, NOTCH1, ASB4, PPP1R12A and several other ARD-containing proteins. Also hydroxylates Asp and His residues within ARDs of ANK1 and TNKS2, respectively. Negatively regulates NOTCH1 activity, accelerating myogenic differentiation. Positively regulates ASB4 activity, promoting vascular differentiation. The polypeptide is Hypoxia-inducible factor 1-alpha inhibitor (Hif1an) (Mus musculus (Mouse)).